Consider the following 419-residue polypeptide: MSMTVSEKILARASGKDRVEAGEIVMADIDVAMTHDLTGPLSVESFRAIGEDRVWDPEKIVVIFDHQVPADSIEAAQNHMIMRDFVEEQGIRNFYDVREGVCHQVLPEKGHVVPGEVVVGTDSHTCTHGALGAFATGIGSTDMAMVFATGKLWFRVPETLRFDVRGKLREHVYAKDVILNIIGRVGADGATYMACEFAGETVAEMSVSDRMVLSNMAIEMGGKTGIVEPDEKTLNYVRRRSGKPWRVFKTDPDAPSLSVMEVDVSDLEPQVACPHNVDNVKPVTEVEGTEIDQVFLGSCTNGRLSDLRDAAAILKNRKVSDSVRMLVIPASREVYRRALDEGLIEIFVDAGALVCNPCCGPCLGGHVGLVGPGEVSLSTSNRNFRGRQGSPEAEVYLSSAAVAAASAVKGSITHPGSLK.

Positions 299, 359, and 362 each coordinate [4Fe-4S] cluster.

Belongs to the aconitase/IPM isomerase family. LeuC type 2 subfamily. Heterodimer of LeuC and LeuD. Requires [4Fe-4S] cluster as cofactor.

It carries out the reaction (2R,3S)-3-isopropylmalate = (2S)-2-isopropylmalate. The protein operates within amino-acid biosynthesis; L-leucine biosynthesis; L-leucine from 3-methyl-2-oxobutanoate: step 2/4. Catalyzes the isomerization between 2-isopropylmalate and 3-isopropylmalate, via the formation of 2-isopropylmaleate. This chain is Probable 3-isopropylmalate dehydratase large subunit, found in Methanothermobacter thermautotrophicus (strain ATCC 29096 / DSM 1053 / JCM 10044 / NBRC 100330 / Delta H) (Methanobacterium thermoautotrophicum).